Consider the following 268-residue polypeptide: Undecaprenyl-diphosphatase (268 aa).

Helical transmembrane passes span 5-25 (TIAQ…IPVS), 43-63 (GKAF…SVYA), 84-104 (LGIL…YQII), 107-127 (VLFE…IVLL), 184-204 (AAEF…AYDL), 214-234 (ADLQ…VLVV), and 247-267 (ALFG…VLVL).

This sequence belongs to the UppP family.

Its subcellular location is the cell inner membrane. It carries out the reaction di-trans,octa-cis-undecaprenyl diphosphate + H2O = di-trans,octa-cis-undecaprenyl phosphate + phosphate + H(+). In terms of biological role, catalyzes the dephosphorylation of undecaprenyl diphosphate (UPP). Confers resistance to bacitracin. The sequence is that of Undecaprenyl-diphosphatase from Chelativorans sp. (strain BNC1).